Reading from the N-terminus, the 411-residue chain is Gamma-glutamyl phosphate reductase (411 aa).

This sequence belongs to the gamma-glutamyl phosphate reductase family.

The protein localises to the cytoplasm. The enzyme catalyses L-glutamate 5-semialdehyde + phosphate + NADP(+) = L-glutamyl 5-phosphate + NADPH + H(+). Its pathway is amino-acid biosynthesis; L-proline biosynthesis; L-glutamate 5-semialdehyde from L-glutamate: step 2/2. Its function is as follows. Catalyzes the NADPH-dependent reduction of L-glutamate 5-phosphate into L-glutamate 5-semialdehyde and phosphate. The product spontaneously undergoes cyclization to form 1-pyrroline-5-carboxylate. The chain is Gamma-glutamyl phosphate reductase from Nautilia profundicola (strain ATCC BAA-1463 / DSM 18972 / AmH).